The primary structure comprises 471 residues: MDILCEENTSLSSTTNSLMQLNDDTRLYSNDFNSGEANTSDAFNWTVDSENRTNLSCEGCLSPSCLSLLHLQEKNWSALLTAVVIILTIAGNILVIMAVSLEKKLQNATNYFLMSLAIADMLLGFLVMPVSMLTILYGYRWPLPSKLCAVWIYLDVLFSTASIMHLCAISLDRYVAIQNPIHHSRFNSRTKAFLKIIAVWTISVGISMPIPVFGLQDDSKVFKEGSCLLADDNFVLIGSFVSFFIPLTIMVITYFLTIKSLQKEATLCVSDLGTRAKLASFSFLPQSSLSSEKLFQRSIHREPGSYTGRRTMQSISNEQKACKVLGIVFFLFVVMWCPFFITNIMAVICKESCNEDVIGALLNVFVWIGYLSSAVNPLVYTLFNKTYRSAFSRYIQCQYKENKKPLQLILVNTIPALAYKSSQLQMGQKKNSKQDAKTTDNDCSMVALGKQHSEEASKDNSDGVNEKVSCV.

The Extracellular portion of the chain corresponds to 1–80 (MDILCEENTS…LQEKNWSALL (80 aa)). Residues Asn-8, Asn-38, Asn-44, Asn-51, and Asn-54 are each glycosylated (N-linked (GlcNAc...) asparagine). The chain crosses the membrane as a helical span at residues 81–97 (TAVVIILTIAGNILVIM). Over 98–111 (AVSLEKKLQNATNY) the chain is Cytoplasmic. Residues 112-137 (FLMSLAIADMLLGFLVMPVSMLTILY) traverse the membrane as a helical segment. Over 138 to 146 (GYRWPLPSK) the chain is Extracellular. The helical transmembrane segment at 147–171 (LCAVWIYLDVLFSTASIMHLCAISL) threads the bilayer. Cys-148 and Cys-227 are joined by a disulfide. Asp-155 provides a ligand contact to serotonin. The DRY motif; important for ligand-induced conformation changes signature appears at 172 to 174 (DRY). Topologically, residues 172–191 (DRYVAIQNPIHHSRFNSRTK) are cytoplasmic. A helical membrane pass occupies residues 192–215 (AFLKIIAVWTISVGISMPIPVFGL). Residues 216–232 (QDDSKVFKEGSCLLADD) are Extracellular-facing. The helical transmembrane segment at 233 to 258 (NFVLIGSFVSFFIPLTIMVITYFLTI) threads the bilayer. The Cytoplasmic portion of the chain corresponds to 259–322 (KSLQKEATLC…QSISNEQKAC (64 aa)). Phosphoserine is present on Ser-280. Residues 323–348 (KVLGIVFFLFVVMWCPFFITNIMAVI) traverse the membrane as a helical segment. Asn-343 is a binding site for serotonin. Cys-349 and Cys-353 are oxidised to a cystine. The Extracellular portion of the chain corresponds to 349-356 (CKESCNED). Residues 357 to 382 (VIGALLNVFVWIGYLSSAVNPLVYTL) form a helical membrane-spanning segment. The NPxxY motif; important for ligand-induced conformation changes and signaling motif lies at 376 to 380 (NPLVY). Residues 383 to 471 (FNKTYRSAFS…DGVNEKVSCV (89 aa)) are Cytoplasmic-facing. A compositionally biased stretch (basic and acidic residues) spans 451–465 (QHSEEASKDNSDGVN). The segment at 451 to 471 (QHSEEASKDNSDGVNEKVSCV) is disordered. The PDZ-binding signature appears at 469–471 (SCV).

It belongs to the G-protein coupled receptor 1 family. As to quaternary structure, interacts (via C-terminus) with MPDZ and PATJ. May interact (via C-terminus) with MPP3, PRDX6, DLG4, DLG1, CASK, APBA1 and MAGI2. Interacts with GRM2 and DRD2; this may affect signaling. As to expression, detected in brain cortex (at protein level). Detected in blood platelets.

The protein localises to the cell membrane. It is found in the cell projection. It localises to the dendrite. Its subcellular location is the axon. The protein resides in the cytoplasmic vesicle. The protein localises to the membrane. It is found in the caveola. It localises to the presynapse. With respect to regulation, G-protein coupled receptor activity is regulated by lipids: oleamide increases HTR2A-mediated activity. Inhibited by IHCH-7179 small molecule: IHCH-7179 acts both as an agonist activator for HTR1A and as an antagonist inhibitor for HTR2A. In terms of biological role, G-protein coupled receptor for 5-hydroxytryptamine (serotonin). Also functions as a receptor for various drugs and psychoactive substances, including mescaline, psilocybin, 1-(2,5-dimethoxy-4-iodophenyl)-2-aminopropane (DOI) and lysergic acid diethylamide (LSD). Ligand binding causes a conformation change that triggers signaling via guanine nucleotide-binding proteins (G proteins) and modulates the activity of downstream effectors. HTR2A is coupled to G(q)/G(11) G alpha proteins and activates phospholipase C-beta, releasing diacylglycerol (DAG) and inositol 1,4,5-trisphosphate (IP3) second messengers that modulate the activity of phosphatidylinositol 3-kinase and promote the release of Ca(2+) ions from intracellular stores, respectively. Beta-arrestin family members inhibit signaling via G proteins and mediate activation of alternative signaling pathways. Affects neural activity, perception, cognition and mood. Plays a role in the regulation of behavior, including responses to anxiogenic situations and psychoactive substances. Plays a role in intestinal smooth muscle contraction, and may play a role in arterial vasoconstriction. Its function is as follows. (Microbial infection) Acts as a receptor for human JC polyomavirus/JCPyV. This Homo sapiens (Human) protein is 5-hydroxytryptamine receptor 2A.